The chain runs to 122 residues: MSKLSRKQQTQKRHRRLRRHLTGTSDRPRLAVFRSNNHIYAQVIDDDAQSTLCSASTVDKELRAGLEANGGSCDASVAVGELVAKRAIAKGIQSVVFDRGGNLYHGRIKALADAAREAGLQF.

Residues 1-21 (MSKLSRKQQTQKRHRRLRRHL) show a composition bias toward basic residues. The segment at 1-26 (MSKLSRKQQTQKRHRRLRRHLTGTSD) is disordered.

This sequence belongs to the universal ribosomal protein uL18 family. As to quaternary structure, part of the 50S ribosomal subunit; part of the 5S rRNA/L5/L18/L25 subcomplex. Contacts the 5S and 23S rRNAs.

Its function is as follows. This is one of the proteins that bind and probably mediate the attachment of the 5S RNA into the large ribosomal subunit, where it forms part of the central protuberance. This is Large ribosomal subunit protein uL18 from Parasynechococcus marenigrum (strain WH8102).